The following is a 275-amino-acid chain: Glycerol-3-phosphate dehydrogenase [NAD(P)+] (275 aa).

3 residues coordinate NADPH: Trp12, Arg32, and Lys105. Sn-glycerol 3-phosphate is bound by residues Lys105, Gly133, and Thr135. Ala137 serves as a coordination point for NADPH. Lys188, Asp241, Ser251, Arg252, and Asn253 together coordinate sn-glycerol 3-phosphate. The active-site Proton acceptor is Lys188. An NADPH-binding site is contributed by Arg252.

Belongs to the NAD-dependent glycerol-3-phosphate dehydrogenase family.

Its subcellular location is the cytoplasm. The catalysed reaction is sn-glycerol 3-phosphate + NAD(+) = dihydroxyacetone phosphate + NADH + H(+). It carries out the reaction sn-glycerol 3-phosphate + NADP(+) = dihydroxyacetone phosphate + NADPH + H(+). Its pathway is membrane lipid metabolism; glycerophospholipid metabolism. In terms of biological role, catalyzes the reduction of the glycolytic intermediate dihydroxyacetone phosphate (DHAP) to sn-glycerol 3-phosphate (G3P), the key precursor for phospholipid synthesis. The chain is Glycerol-3-phosphate dehydrogenase [NAD(P)+] from Paramagnetospirillum magneticum (strain ATCC 700264 / AMB-1) (Magnetospirillum magneticum).